The following is a 381-amino-acid chain: 1-deoxy-D-xylulose 5-phosphate reductoisomerase (381 aa).

NADPH is bound by residues Thr10, Gly11, Ser12, Ile13, Gly36, Lys37, Asn38, and Asn120. Lys121 contributes to the 1-deoxy-D-xylulose 5-phosphate binding site. NADPH is bound at residue Glu122. Asp146 serves as a coordination point for Mn(2+). The 1-deoxy-D-xylulose 5-phosphate site is built by Ser147, Glu148, Ser172, and His195. Glu148 lines the Mn(2+) pocket. Gly201 contributes to the NADPH binding site. Residues Ser208, Asn213, Lys214, and Glu217 each coordinate 1-deoxy-D-xylulose 5-phosphate. Position 217 (Glu217) interacts with Mn(2+).

It belongs to the DXR family. Mg(2+) serves as cofactor. Mn(2+) is required as a cofactor.

The enzyme catalyses 2-C-methyl-D-erythritol 4-phosphate + NADP(+) = 1-deoxy-D-xylulose 5-phosphate + NADPH + H(+). Its pathway is isoprenoid biosynthesis; isopentenyl diphosphate biosynthesis via DXP pathway; isopentenyl diphosphate from 1-deoxy-D-xylulose 5-phosphate: step 1/6. Functionally, catalyzes the NADPH-dependent rearrangement and reduction of 1-deoxy-D-xylulose-5-phosphate (DXP) to 2-C-methyl-D-erythritol 4-phosphate (MEP). The polypeptide is 1-deoxy-D-xylulose 5-phosphate reductoisomerase (Lysinibacillus sphaericus (strain C3-41)).